We begin with the raw amino-acid sequence, 23 residues long: GIGKFLHSAKKFGKAFVGEIMNS.

As to expression, expressed by the skin glands.

Its subcellular location is the secreted. Antimicrobial peptide. This chain is Magainin-R1, found in Xenopus ruwenzoriensis (Uganda clawed frog).